Reading from the N-terminus, the 202-residue chain is Na(+)-translocating NADH-quinone reductase subunit E (202 aa).

6 helical membrane passes run S11–I31, I35–V55, F81–V101, G114–V134, V144–I164, and I182–L202.

It belongs to the NqrDE/RnfAE family. As to quaternary structure, composed of six subunits; NqrA, NqrB, NqrC, NqrD, NqrE and NqrF.

It is found in the cell inner membrane. The enzyme catalyses a ubiquinone + n Na(+)(in) + NADH + H(+) = a ubiquinol + n Na(+)(out) + NAD(+). Functionally, NQR complex catalyzes the reduction of ubiquinone-1 to ubiquinol by two successive reactions, coupled with the transport of Na(+) ions from the cytoplasm to the periplasm. NqrA to NqrE are probably involved in the second step, the conversion of ubisemiquinone to ubiquinol. This chain is Na(+)-translocating NADH-quinone reductase subunit E, found in Saccharophagus degradans (strain 2-40 / ATCC 43961 / DSM 17024).